The chain runs to 114 residues: Ribonuclease P protein component (114 aa).

Belongs to the RnpA family. In terms of assembly, consists of a catalytic RNA component (M1 or rnpB) and a protein subunit.

It catalyses the reaction Endonucleolytic cleavage of RNA, removing 5'-extranucleotides from tRNA precursor.. Its function is as follows. RNaseP catalyzes the removal of the 5'-leader sequence from pre-tRNA to produce the mature 5'-terminus. It can also cleave other RNA substrates such as 4.5S RNA. The protein component plays an auxiliary but essential role in vivo by binding to the 5'-leader sequence and broadening the substrate specificity of the ribozyme. The chain is Ribonuclease P protein component from Lactiplantibacillus plantarum (strain ATCC BAA-793 / NCIMB 8826 / WCFS1) (Lactobacillus plantarum).